A 120-amino-acid polypeptide reads, in one-letter code: ATP-dependent Clp protease adapter protein ClpS (120 aa).

Belongs to the ClpS family. Binds to the N-terminal domain of the chaperone ClpA.

In terms of biological role, involved in the modulation of the specificity of the ClpAP-mediated ATP-dependent protein degradation. The chain is ATP-dependent Clp protease adapter protein ClpS from Pseudomonas fluorescens (strain ATCC BAA-477 / NRRL B-23932 / Pf-5).